Consider the following 97-residue polypeptide: Aspartyl/glutamyl-tRNA(Asn/Gln) amidotransferase subunit C (97 aa).

It belongs to the GatC family. In terms of assembly, heterotrimer of A, B and C subunits.

It catalyses the reaction L-glutamyl-tRNA(Gln) + L-glutamine + ATP + H2O = L-glutaminyl-tRNA(Gln) + L-glutamate + ADP + phosphate + H(+). The catalysed reaction is L-aspartyl-tRNA(Asn) + L-glutamine + ATP + H2O = L-asparaginyl-tRNA(Asn) + L-glutamate + ADP + phosphate + 2 H(+). In terms of biological role, allows the formation of correctly charged Asn-tRNA(Asn) or Gln-tRNA(Gln) through the transamidation of misacylated Asp-tRNA(Asn) or Glu-tRNA(Gln) in organisms which lack either or both of asparaginyl-tRNA or glutaminyl-tRNA synthetases. The reaction takes place in the presence of glutamine and ATP through an activated phospho-Asp-tRNA(Asn) or phospho-Glu-tRNA(Gln). In Roseiflexus sp. (strain RS-1), this protein is Aspartyl/glutamyl-tRNA(Asn/Gln) amidotransferase subunit C.